The chain runs to 208 residues: FAS-associated death domain protein (208 aa).

A DED domain is found at 3 to 81 (PFLVLLHSVS…RHDLLRRVDD (79 aa)). A Death domain is found at 97–181 (LCAAFNVICD…LVADLVQEVQ (85 aa)). R117 is a glycosylation site ((Microbial infection) N-beta-linked (GlcNAc) arginine). Positions 187–208 (QNRSGAMSPMSWNSDASTSEAS) are disordered. Position 194 is a phosphoserine (S194).

Can self-associate. Component of the AIM2 PANoptosome complex, a multiprotein complex that drives inflammatory cell death (PANoptosis). Component of the death-induced signaling complex (DISC) composed of cell surface receptor FAS/CD95 or TNFRSF1A, adapter protein FADD and the CASP8 protease; recruitment of CASP8 to the complex is required for processing of CASP8 into the p18 and p10 subunits. Interacts (via death domain) with FAS (via death domain). Interacts directly (via DED domain) with NOL3 (via CARD domain); inhibits death-inducing signaling complex (DISC) assembly by inhibiting the increase in FAS-FADD binding induced by FAS activation. Interacts with CFLAR, PEA15 and MBD4. When phosphorylated, part of a complex containing HIPK3 and FAS. May interact with MAVS/IPS1. Interacts with MOCV v-CFLAR protein and PIDD1. Interacts with RIPK1 and TRADD. Interacts with stimulated TNFRSF10B. Interacts with DDX24. In terms of assembly, (Microbial infection) Interacts with human papillomavirus 16/HPV16 protein E6. As to quaternary structure, (Microbial infection) Interacts with molluscum contagiosum virus proteins MC159L/v-CFLAR and MC160L. Post-translationally, (Microbial infection) Glycosylated at Arg-117 by enteropathogenic E.coli protein NleB1, C.rodentium protein NleB and S.typhimurium protein Ssek1: arginine GlcNAcylation prevents recruitment of caspase-8 or caspase-10 to the activated Fas (CD95) or TNFR-1 receptors. Expressed in a wide variety of tissues, except for peripheral blood mononuclear leukocytes.

The protein localises to the cytoplasm. Apoptotic adapter molecule that recruits caspases CASP8 or CASP10 to the activated FAS/CD95 or TNFRSF1A/TNFR-1 receptors. The resulting aggregate called the death-inducing signaling complex (DISC) performs CASP8 proteolytic activation. Active CASP8 initiates the subsequent cascade of caspases mediating apoptosis. Involved in interferon-mediated antiviral immune response, playing a role in the positive regulation of interferon signaling. This chain is FAS-associated death domain protein, found in Homo sapiens (Human).